We begin with the raw amino-acid sequence, 152 residues long: Small ribosomal subunit protein uS9 (152 aa).

Belongs to the universal ribosomal protein uS9 family.

The polypeptide is Small ribosomal subunit protein uS9 (Mycobacterium ulcerans (strain Agy99)).